Reading from the N-terminus, the 268-residue chain is MAVNVYSTSVTSDNLSRHDMLAWINESLQLNLTKIEQLCSGAAYCQFMDMLFPGSIALKKVKFQAKLEHEYIQNFKILQAGFKRMGVDKIIPVDKLVKGKFQDNFEFVQWFKKFFDANYDGKEYDPVAARQGQETAVAPSLVAPALSKPKKPLGSGSAAPQRPIATQRTTAAPKAGPGMVRKNPGMGNGDDEAAELMQQVKVLKLTVEDLEKERDFYFGKLRNIELICQENEGENDPVLQRIVDILYATDEGFVIPDEGGPQEEQEEY.

Ala-2 carries the N-acetylalanine modification. In terms of domain architecture, Calponin-homology (CH) spans Asn-14 to Asp-116. N6-crotonyllysine is present on Lys-66. Phosphotyrosine is present on Tyr-124. An interaction with MTUS2/TIP150 region spans residues Tyr-124–Tyr-268. The interval Leu-146–Asp-191 is disordered. The residue at position 155 (Ser-155) is a Phosphoserine. The EB1 C-terminal domain occupies Gly-185 to Ile-255. An interaction with APC region spans residues Thr-206–Glu-211. The interval Glu-208–Tyr-268 is DCTN1-binding. At Lys-220 the chain carries N6-acetyllysine. The APC-binding stretch occupies residues Lys-220–Ile-242. The tract at residues Glu-232–Ile-255 is interaction with SKA1.

Belongs to the MAPRE family. Homodimer. Heterodimer with MAPRE3. Interacts with DCTN1, DCTN2, TERF1 and dynein intermediate chain. Interaction with DIAPH1 and DIAPH2. Interacts (via C-terminal residues 206-211) with APC (via C-terminal residues 2674-2845); the interaction inhibits association with and bundling of F-actin. Interacts with CLASP2, DST, KIF2C and STIM1; probably required for their targeting to the growing microtubule plus ends. Interacts with MTUS2; interaction is direct and probably targets MTUS2 to microtubules. Interacts (via C-terminus) with SKA1 (via SXIP motif); the interaction is direct and stabilizes the kinetochore-microtubule attachment of the SKA1 complex. Interacts with APC2. Interacts with CLASP1. Interacts with CDK5RAP2. According to another report, MAPRE1 does not interact with CDK5RAP2. Interacts with MACF1. Interacts with RABL2/RABL2A; binds preferentially to GTP-bound RABL2. Interacts with KCNAB2. Interacts (via C-terminus) with CLIP1. Interacts with SLAIN2 and SLAIN1. Interacts with KIF18B; this interaction is required for efficient accumulation of KIF18B at microtubule plus ends. Interacts with MISP. Interacts with KNSTRN. Interacts with NCKAP5L. Interacts with AKAP9. Interacts with PDE4DIP; this interaction, which is PDE4DIP isoform-specific, is required for its recruitment to the Golgi apparatus. Interacts with CAMSAP2. May form a pericentrosomal complex with AKAP9, CDK5RAP2 and PDE4DIP isoform 2/MMG8/SMYLE; within this complex, MAPRE1 binding to CDK5RAP2 may be mediated by PDE4DIP. Contrary to other mammalian species, does not interact with CDK5RAP2, possibly due to the lack of conservation of the MAPRE1-binding motif in rat CDK5RAP2. Interacts with AKNA. Interacts with GAS2L1, GAS2L2, and GAS2L3. Interacts with RARRES1 and AGBL2. Post-translationally, acetylation at Lys-220 by KAT2B/PCAF promotes dynamic kinetochore-microtubule interactions in early mitosis. Crotonylated by KAT5 during mitosis, promoting astral microtubule plasticity and dynamic connection between astral microtubules and the cortex during mitotic chromosome segregation, thereby ensuring accurate spindle positioning in mitosis. Decrotonylated by HDAC3.

It is found in the cytoplasm. It localises to the cytoskeleton. Its subcellular location is the microtubule organizing center. The protein resides in the centrosome. The protein localises to the golgi apparatus. It is found in the spindle. It localises to the spindle pole. In terms of biological role, plus-end tracking protein (+TIP) that binds to the plus-end of microtubules and regulates the dynamics of the microtubule cytoskeleton. Recruits other +TIP proteins to microtubules by binding to a conserved Ser-X-Leu-Pro (SXLP) motif in their polypeptide chains. Promotes cytoplasmic microtubule nucleation and elongation. Involved in mitotic spindle positioning by stabilizing microtubules and promoting dynamic connection between astral microtubules and the cortex during mitotic chromosome segregation. Assists chromosome alignment in metaphase by recruiting the SKA complex to the spindle and stabilizing its interactions with microtubule bundles (K-fibers). Also acts as a regulator of minus-end microtubule organization: interacts with the complex formed by AKAP9 and PDE4DIP, leading to recruit CAMSAP2 to the Golgi apparatus, thereby tethering non-centrosomal minus-end microtubules to the Golgi, an important step for polarized cell movement. Promotes elongation of CAMSAP2-decorated microtubule stretches on the minus-end of microtubules. Acts as a regulator of autophagosome transport via interaction with CAMSAP2. Functions downstream of Rho GTPases and DIAPH1 in stable microtubule formation. May play a role in cell migration. The polypeptide is Microtubule-associated protein RP/EB family member 1 (Mapre1) (Rattus norvegicus (Rat)).